The sequence spans 354 residues: MNTLFMHCRPGFEGEVCAEISEHAALLGVAGYAKGKPQSACAEFVCTEPDGAQRLMHELRFAQLIFPRQWARGAFVELPETDRISVLLEHLADLPVCGSLWLEVLDSNEGKELSTFCRKFEVPLRKALEKAGRLVDDARRPRLLLTFISGRRVFLGLAEADNSALWPMGIPRLKFPREAPSRSTLKLEEAWHQFIPREQWEQRLNDDMTGVDLGASPGGWTYQLVKRGMLVTAIDNGPMAESLMDTGLVTHLMADGFTWKPKHTVDWMVCDIVEKPARTASLIETWLGEGLCREAVVNLKLPMKQRHAEVRKLLDRMEAGFKERKVKVSIACKQLYHDREEVTCHLRRLDLKPH.

Residues Ser-183, 216-219 (SPGG), Asp-235, Asp-255, and Asp-271 each bind S-adenosyl-L-methionine. The Proton acceptor role is filled by Lys-300.

Belongs to the class I-like SAM-binding methyltransferase superfamily. RNA methyltransferase RlmE family. RlmM subfamily. In terms of assembly, monomer.

The protein resides in the cytoplasm. It carries out the reaction cytidine(2498) in 23S rRNA + S-adenosyl-L-methionine = 2'-O-methylcytidine(2498) in 23S rRNA + S-adenosyl-L-homocysteine + H(+). In terms of biological role, catalyzes the 2'-O-methylation at nucleotide C2498 in 23S rRNA. The sequence is that of Ribosomal RNA large subunit methyltransferase M from Pseudomonas entomophila (strain L48).